A 161-amino-acid chain; its full sequence is Cyclic pyranopterin monophosphate synthase (161 aa).

Substrate contacts are provided by residues 75-77 (LCH) and 113-114 (ME). The active site involves Asp128.

This sequence belongs to the MoaC family. As to quaternary structure, homohexamer; trimer of dimers.

The catalysed reaction is (8S)-3',8-cyclo-7,8-dihydroguanosine 5'-triphosphate = cyclic pyranopterin phosphate + diphosphate. It participates in cofactor biosynthesis; molybdopterin biosynthesis. In terms of biological role, catalyzes the conversion of (8S)-3',8-cyclo-7,8-dihydroguanosine 5'-triphosphate to cyclic pyranopterin monophosphate (cPMP). In Erwinia tasmaniensis (strain DSM 17950 / CFBP 7177 / CIP 109463 / NCPPB 4357 / Et1/99), this protein is Cyclic pyranopterin monophosphate synthase.